We begin with the raw amino-acid sequence, 373 residues long: Dual-specificity RNA methyltransferase RlmN (373 aa).

Glutamate 91 functions as the Proton acceptor in the catalytic mechanism. The Radical SAM core domain occupies 97–339; it reads EDDRGTLCIS…TTVRKTRGDD (243 aa). A disulfide bridge links cysteine 104 with cysteine 344. 3 residues coordinate [4Fe-4S] cluster: cysteine 111, cysteine 115, and cysteine 118. Residues 165 to 166, serine 197, 219 to 221, and asparagine 301 contribute to the S-adenosyl-L-methionine site; these read GE and SLH. Cysteine 344 (S-methylcysteine intermediate) is an active-site residue.

The protein belongs to the radical SAM superfamily. RlmN family. The cofactor is [4Fe-4S] cluster.

Its subcellular location is the cytoplasm. It carries out the reaction adenosine(2503) in 23S rRNA + 2 reduced [2Fe-2S]-[ferredoxin] + 2 S-adenosyl-L-methionine = 2-methyladenosine(2503) in 23S rRNA + 5'-deoxyadenosine + L-methionine + 2 oxidized [2Fe-2S]-[ferredoxin] + S-adenosyl-L-homocysteine. The enzyme catalyses adenosine(37) in tRNA + 2 reduced [2Fe-2S]-[ferredoxin] + 2 S-adenosyl-L-methionine = 2-methyladenosine(37) in tRNA + 5'-deoxyadenosine + L-methionine + 2 oxidized [2Fe-2S]-[ferredoxin] + S-adenosyl-L-homocysteine. In terms of biological role, specifically methylates position 2 of adenine 2503 in 23S rRNA and position 2 of adenine 37 in tRNAs. m2A2503 modification seems to play a crucial role in the proofreading step occurring at the peptidyl transferase center and thus would serve to optimize ribosomal fidelity. This is Dual-specificity RNA methyltransferase RlmN from Paracidovorax citrulli (strain AAC00-1) (Acidovorax citrulli).